Here is a 111-residue protein sequence, read N- to C-terminus: Cell division protein FtsB (111 aa).

Topologically, residues 1 to 3 (MRL) are cytoplasmic. Residues 4–21 (ITLFLLLLLLAIQYPLWL) traverse the membrane as a helical segment. Residues 22 to 111 (GKGGWLRVWD…PPPAGQQAHH (90 aa)) lie on the Periplasmic side of the membrane. The stretch at 31–64 (DMQKQVTAQNQRNAELKQRNTKLEGEVKDLKEGT) forms a coiled coil. Residues 89-111 (APAPKTSETPLPPPPPAGQQAHH) are disordered.

This sequence belongs to the FtsB family. In terms of assembly, part of a complex composed of FtsB, FtsL and FtsQ.

The protein localises to the cell inner membrane. Functionally, essential cell division protein. May link together the upstream cell division proteins, which are predominantly cytoplasmic, with the downstream cell division proteins, which are predominantly periplasmic. This is Cell division protein FtsB from Ralstonia pickettii (strain 12J).